Here is a 453-residue protein sequence, read N- to C-terminus: tRNA modification GTPase MnmE (453 aa).

Residues Arg-22, Glu-79, and Lys-119 each contribute to the (6S)-5-formyl-5,6,7,8-tetrahydrofolate site. One can recognise a TrmE-type G domain in the interval 215 to 376; it reads GMKVVIAGRP…LRNHLKECMG (162 aa). Asn-225 contributes to the K(+) binding site. Residues 225 to 230, 244 to 250, 269 to 272, and 334 to 337 each bind GTP; these read NAGKSS, TDIAGTT, DTAG, and NKAD. Ser-229 lines the Mg(2+) pocket. The K(+) site is built by Thr-244, Ile-246, and Thr-249. Residue Thr-250 coordinates Mg(2+). Lys-453 contacts (6S)-5-formyl-5,6,7,8-tetrahydrofolate.

Belongs to the TRAFAC class TrmE-Era-EngA-EngB-Septin-like GTPase superfamily. TrmE GTPase family. As to quaternary structure, homodimer. Heterotetramer of two MnmE and two MnmG subunits. K(+) is required as a cofactor.

It localises to the cytoplasm. Its function is as follows. Exhibits a very high intrinsic GTPase hydrolysis rate. Involved in the addition of a carboxymethylaminomethyl (cmnm) group at the wobble position (U34) of certain tRNAs, forming tRNA-cmnm(5)s(2)U34. This chain is tRNA modification GTPase MnmE, found in Vibrio parahaemolyticus serotype O3:K6 (strain RIMD 2210633).